A 93-amino-acid chain; its full sequence is uncharacterized protein (93 aa).

To B.subtilis YdcN C-terminal region.

This is an uncharacterized protein from Methanocaldococcus jannaschii (strain ATCC 43067 / DSM 2661 / JAL-1 / JCM 10045 / NBRC 100440) (Methanococcus jannaschii).